A 149-amino-acid chain; its full sequence is Urease accessory protein UreE (149 aa).

The protein belongs to the UreE family.

The protein localises to the cytoplasm. In terms of biological role, involved in urease metallocenter assembly. Binds nickel. Probably functions as a nickel donor during metallocenter assembly. This Ureaplasma urealyticum serovar 10 (strain ATCC 33699 / Western) protein is Urease accessory protein UreE.